Consider the following 466-residue polypeptide: Ribulose bisphosphate carboxylase large chain (466 aa).

K5 bears the N6,N6,N6-trimethyllysine mark. Positions 114 and 164 each coordinate substrate. K166 functions as the Proton acceptor in the catalytic mechanism. K168 lines the substrate pocket. Mg(2+) contacts are provided by K192, D194, and E195. Position 192 is an N6-carboxylysine (K192). H285 acts as the Proton acceptor in catalysis. R286, H318, and S370 together coordinate substrate.

The protein belongs to the RuBisCO large chain family. Type I subfamily. Heterohexadecamer of 8 large chains and 8 small chains; disulfide-linked. The disulfide link is formed within the large subunit homodimers. The cofactor is Mg(2+). Post-translationally, the disulfide bond which can form in the large chain dimeric partners within the hexadecamer appears to be associated with oxidative stress and protein turnover.

It localises to the plastid. Its subcellular location is the chloroplast. It catalyses the reaction 2 (2R)-3-phosphoglycerate + 2 H(+) = D-ribulose 1,5-bisphosphate + CO2 + H2O. It carries out the reaction D-ribulose 1,5-bisphosphate + O2 = 2-phosphoglycolate + (2R)-3-phosphoglycerate + 2 H(+). In terms of biological role, ruBisCO catalyzes two reactions: the carboxylation of D-ribulose 1,5-bisphosphate, the primary event in carbon dioxide fixation, as well as the oxidative fragmentation of the pentose substrate in the photorespiration process. Both reactions occur simultaneously and in competition at the same active site. This chain is Ribulose bisphosphate carboxylase large chain, found in Berzelia lanuginosa (Buttonbush).